Here is a 316-residue protein sequence, read N- to C-terminus: Acetaldehyde dehydrogenase (316 aa).

11–14 lines the NAD(+) pocket; the sequence is SGNI. The active-site Acyl-thioester intermediate is Cys131. NAD(+) contacts are provided by residues 162-170 and Asn289; that span reads SAGPGTRAN.

It belongs to the acetaldehyde dehydrogenase family. In terms of assembly, interacts with MhpE.

The enzyme catalyses acetaldehyde + NAD(+) + CoA = acetyl-CoA + NADH + H(+). Its pathway is aromatic compound metabolism; 3-phenylpropanoate degradation. Functionally, catalyzes the conversion of acetaldehyde to acetyl-CoA, using NAD(+) and coenzyme A. Is the final enzyme in the meta-cleavage pathway for the degradation of aromatic compounds. The polypeptide is Acetaldehyde dehydrogenase (Klebsiella pneumoniae subsp. pneumoniae (strain ATCC 700721 / MGH 78578)).